A 446-amino-acid chain; its full sequence is Telomere-binding protein 51 kDa subunit (446 aa).

The protein belongs to the telombin family. As to quaternary structure, monomer.

The protein localises to the nucleus. It localises to the chromosome. Its subcellular location is the telomere. Functionally, may function as protective capping of the single-stranded telomeric overhang. May also participate in telomere length regulation during DNA replication. Binds specifically to the T4G4-containing extension on the 3'strand and protects this region of the telomere from nuclease digestion and chemical modification. This Euplotes crassus protein is Telomere-binding protein 51 kDa subunit.